Consider the following 2090-residue polypeptide: MASAVSPANLPAVLLQPRWKRVVGWSGPVPRPRHGHRAVAIKELIVVFGGGNEGIVDELHVYNTATNQWFIPAVRGDIPPGCAAYGFVCDGTRLLVFGGMVEYGKYSNDLYELQASRWEWKRLKAKTPKNGPPPCPRLGHSFSLVGNKCYLFGGLANDSEDPKNNIPRYLNDLYILELRPGSGVVAWDIPITYGVLPPPRESHTAVVYTEKDNKKSKLVIYGGMSGCRLGDLWTLDIETLTWNKPSLSGVAPLPRSLHSATTIGNKMYVFGGWVPLVMDDVKVATHEKEWKCTNTLACLNLDTMAWETILMDTLEDNIPRARAGHCAVAINTRLYIWSGRDGYRKAWNNQVCCKDLWYLETEKPPPPARVQLVRANTNSLEVSWGAVATADSYLLQLQKYDIPATAATATSPTPNPVPSVPANPPKSPAPAAAAPAVQPLTQVGITLVPQAAAAPPSTTTIQVLPTVPGSSISVPTAARAQGVPAVLKVTGPQATTGTPLVTMRPAGQAGKAPVTVTSLPASVRMVVPTQSAQGTVIGSNPQMSGMAALAAAAAATQKIPPSSAPTVLSVPAGTTIVKTVAVTPGTTTLPATVKVASSPVMVSNPATRMLKTAAAQVGTSVSSAANTSTRPIITVHKSGTVTVAQQAQVVTTVVGGVTKTITLVKSPISVPGGSALISNLGKVMSVVQTKPVQTSAVTGQASTGPVTQIIQTKGPLPAGTILKLVTSADGKPTTIITTTQASGAGSKPTILGISSVSPSTTKPGTTTIIKTIPMSAIITQAGATGVTSTPGIKSPITIITTKVMTSGTGAPAKIITAVPKIATGHGQQGVTQVVLKGAPGQPGAILRTVPMSGVRLVTPVTVSAVKPAVTTLVVKGTTGVTTLGTVTGTVSTSLAGAGAHSTSASLATPITTLGTIATLSSQVINPTAITVSAAQTTLTAAGGLTTPTITMQPVSQPTQVTLITAPSGVEAQPVHDLPVSILASPTTEQPTATVTIADSGQGDVQPGTVTLVCSNPPCETHETGTTNTATTTVVANLGGHPQPTQVQFVCDRQEAAASLVTSAVGQQNGNVVRVCSNPPCETHETGTTNTATTATSNMAGQHGCSNPPCETHETGTTSTATTAMSSMGTGQQRDTRHTSSNPTVVRITVAPGALERTQGTVKPQCQTQQANMTNTTMTVQATRSPCPAGPLLRPSVALEAGNHSPAFVQLALPSVRVGLSGPSNKDMPTGHQLETYHTYTTNTPTTALSIMGAGELGTARLIPTSTYESLQASSPSSTMTMTALEALLCPSATVTQVCSNPPCETHETGTTNTATTSNAGSAQRVCSNPPCETHETGTTHTATTATSNGGAGQPEGGQQPAGGRPCETHQTTSTGTTMSVSVGALLPDATPSHGTLESGLEVVAVSTVTSQAGATLLASFPTQRVCSNPPCETHETGTTHTATTVTSNMSSNQDPPPAASDQGEVVSTQGDSANITSSSGITTTVSSTLPRAVTTVTQSTPVPGPSVPNISSLTETPGALTSEVPIPATITVTIANTETSDMPFSAVDILQPPEELQVSPGPRQQLPPRQLLQSASTPLMGESSEVLSASQTPELQAAVDLSSTGDPSSGQEPTSSAVVATVVVQPPPPTQSEVDQLSLPQELMAEAQAGTTTLMVTGLTPEELAVTAAAEAAAQAAATEEAQALAIQAVLQAAQQAVMAGTGEPMDTSEAAAAVTQAELGHLSAEGQEGQATTIPIVLTQQELAALVQQQQQLQEVQAQAQQQHHLPTEALAPADSLNDPSIESNCLNELASAVPSTVALLPSTATESLAPSNTFVAPQPVVVASPAKMQAAATLTEVDNGIESLGVKPDLPPPPSKAPVKKENQWFDVGVIKGTSVMVTHYFLPPDDAVQSDDDSGTIPDYNQLKKQELQPGTAYKFRVAGINACGRGPFSEISAFKTCLPGFPGAPCAIKISKSPDGAHLTWEPPSVTSGKIIEYSVYLAIQSSQAGGEPKSSTPAQLAFMRVYCGPSPSCLVQSSSLSNAHIDYTTKPAIIFRIAARNEKGYGPATQVRWLQETSKDSSGTKPASKRPMSSPEMKSAPKKSKADGQ.

Position 2 is an N-acetylalanine (alanine 2). Serine 6 bears the Phosphoserine mark. Kelch repeat units lie at residues 44–89 (LIVV…GFVC), 93–140 (RLLV…RLGH), 148–194 (KCYL…ITYG), 217–265 (KLVI…TIGN), and 266–313 (KMYV…LMDT). Residues lysine 105, lysine 163, and lysine 244 each participate in a glycyl lysine isopeptide (Lys-Gly) (interchain with G-Cter in ubiquitin) cross-link. Residue lysine 282 forms a Glycyl lysine isopeptide (Lys-Gly) (interchain with G-Cter in SUMO2) linkage. Position 288 is an N6-acetyllysine (lysine 288). A Glycyl lysine isopeptide (Lys-Gly) (interchain with G-Cter in ubiquitin) cross-link involves residue lysine 363. Residues 366 to 469 (PPARVQLVRA…TIQVLPTVPG (104 aa)) form the Fibronectin type-III 1 domain. The segment at 407–434 (ATATSPTPNPVPSVPANPPKSPAPAAAA) is disordered. Serine 411 is subject to Phosphoserine. Over residues 413–428 (TPNPVPSVPANPPKSP) the composition is skewed to pro residues. The interval 500-550 (LVTMRPAGQAGKAPVTVTSLPASVRMVVPTQSAQGTVIGSNPQMSGMAALA) is required for interaction with OGT. Omega-N-methylarginine is present on residues arginine 504 and arginine 524. Phosphoserine occurs at positions 598, 666, and 669. Positions 610-722 (LKTAAAQVGT…KGPLPAGTIL (113 aa)) are interaction with SIN3A. Residues 750 to 902 (ILGISSVSPS…SLAGAGAHST (153 aa)) are interaction with ZBTB17. Lysine 813 is modified (N6-acetyllysine). Residues 813–912 (KIITAVPKIA…SASLATPITT (100 aa)) are interaction with GABP2. HCF repeat repeat units lie at residues 1010-1035 (TLVC…TVVA), 1072-1097 (VRVC…ATSN), and 1101-1126 (QHGC…AMSS). The interval 1098–1140 (MAGQHGCSNPPCETHETGTTSTATTAMSSMGTGQQRDTRHTSS) is disordered. Residues 1114 to 1130 (TGTTSTATTAMSSMGTG) are compositionally biased toward low complexity. The stretch at 1157–1182 (TQGTVKPQCQTQQANMTNTTMTVQAT) is one HCF repeat 4; degenerate repeat. Serine 1204 is subject to Phosphoserine. Arginine 1216 carries the post-translational modification Asymmetric dimethylarginine. Position 1223 is a phosphoserine (serine 1223). HCF repeat repeat units lie at residues 1295 to 1320 (TQVC…SNAG) and 1323 to 1348 (QRVC…ATSN). Disordered stretches follow at residues 1302–1374 (PCET…TTST) and 1444–1486 (TVTS…TTVS). Positions 1308-1321 (TGTTNTATTSNAGS) are enriched in low complexity. Residues 1358–1383 (QQPAGGRPCETHQTTSTGTTMSVSVG) form an HCF repeat 7; degenerate repeat. Residues 1423-1448 (QRVCSNPPCETHETGTTHTATTVTSN) form an HCF repeat 8 repeat. Over residues 1465-1475 (VVSTQGDSANI) the composition is skewed to polar residues. Low complexity predominate over residues 1476–1486 (TSSSGITTTVS). Phosphothreonine is present on threonine 1500. Phosphoserine is present on residues serine 1506, serine 1559, and serine 1826. Fibronectin type-III domains lie at 1853–1943 (PPPP…TCLP) and 1945–2061 (FPGA…TSKD). Residues lysine 1862 and lysine 1863 each participate in a glycyl lysine isopeptide (Lys-Gly) (interchain with G-Cter in ubiquitin) cross-link. The residue at position 1893 (serine 1893) is a Phosphoserine. Residues 2049 to 2090 (ATQVRWLQETSKDSSGTKPASKRPMSSPEMKSAPKKSKADGQ) form a disordered region. The residue at position 2060 (lysine 2060) is an N6-acetyllysine. Lysine 2079 is covalently cross-linked (Glycyl lysine isopeptide (Lys-Gly) (interchain with G-Cter in SUMO2)).

In terms of assembly, composed predominantly of six polypeptides ranging from 110 to 150 kDa and a minor 300 kDa polypeptide. The majority of N- and C-terminal cleavage products remain tightly, albeit non-covalently, associated. Interacts with POU2F1, CREB3, ZBTB17, EGR2, E2F4, CREBZF, SP1, GABP2, Sin3 HDAC complex (SIN3A, HDAC1, HDAC2, SUDS3), SAP30, SIN3B and FHL2. Component of a MLL1 complex, composed of at least the core components KMT2A/MLL1, ASH2L, HCFC1, WDR5 and RBBP5, as well as the facultative components BACC1, CHD8, DPY30, E2F6, HCFC2, HSP70, INO80C, KANSL1, LAS1L, MAX, MCRS1, MEN1, MGA, KAT8, PELP1, PHF20, PRP31, RING2, RUVBL1, RUVBL2, SENP3, TAF1, TAF4, TAF6, TAF7, TAF9 and TEX10. Component of a THAP1/THAP3-HCFC1-OGT complex that is required for the regulation of the transcriptional activity of RRM1. Interacts directly with THAP3 (via its HBM). Interacts (via the Kelch-repeat domain) with THAP1 (via the HBM); the interaction recruits HCHC1 to the RRM1. Interacts directly with OGT; the interaction, which requires the HCFC1 cleavage site domain, glycosylates and promotes the proteolytic processing of HCFC1 and retains OGT in the nucleus. Component of the SET1 complex, at least composed of the catalytic subunit (SETD1A or SETD1B), WDR5, WDR82, RBBP5, ASH2L, CXXC1, HCFC1 and DPY30. Component of the NSL complex at least composed of MOF/KAT8, KANSL1, KANSL2, KANSL3, MCRS1, PHF20, OGT1/OGT, WDR5 and HCFC1. Component of a complex at least composed of ZNF335, HCFC1, CCAR2, EMSY, MKI67, RBBP5, ASH2L and WDR5; the complex is formed as a result of interactions between components of a nuclear receptor-mediated transcription complex and a histone methylation complex. Within the complex interacts with ZNF335. Interacts with TET2 and TET3. Interacts with HCFC1R1. Interacts with THAP11. Interacts (via Kelch domain) with KMT2E (via HBM motif). Interacts with E2F1. Accessory scaffold component of the polycomb repressive deubiquitinase (PR-DUB) complex, at least composed of BAP1, one of ASXL1, ASXL2 or (probably) ASXL3 and one of MBD5 or MBD6; the PR-DUB core associates with a number of accessory proteins, including FOXK1, FOXK2, KDM1B, HCFC1, YY1 and OGT. Interacts with YY1 (via Gly-rich region); the interaction is direct. Interacts with BAP1 (via HBM-like motif). In terms of processing, proteolytically cleaved at one or several PPCE--THET sites within the HCF repeats. Cleavage is promoted by O-glycosylation. Further cleavage of the primary N- and C-terminal chains results in a 'trimming' and accumulation of the smaller chains. Cleavage is promoted by O-glycosylation. Post-translationally, O-glycosylated. GlcNAcylation by OGT promotes proteolytic processing. Ubiquitinated. Lys-1862 and Lys-1863 are ubiquitinated both via 'Lys-48'- and 'Lys-63'-linked polyubiquitin chains. BAP1 mediated deubiquitination of 'Lys-48'-linked polyubiquitin chains; deubiquitination by BAP1 does not seem to stabilize the protein.

The protein localises to the cytoplasm. It localises to the nucleus. In terms of biological role, transcriptional coregulator. Serves as a scaffold protein, bridging interactions between transcription factors, including THAP11 and ZNF143, and transcriptional coregulators. Involved in control of the cell cycle. Also antagonizes transactivation by ZBTB17 and GABP2; represses ZBTB17 activation of the p15(INK4b) promoter and inhibits its ability to recruit p300. Coactivator for EGR2 and GABP2. Tethers the chromatin modifying Set1/Ash2 histone H3 'Lys-4' methyltransferase (H3K4me) and Sin3 histone deacetylase (HDAC) complexes (involved in the activation and repression of transcription respectively) together. As part of the NSL complex it may be involved in acetylation of nucleosomal histone H4 on several lysine residues. Recruits KMT2E to E2F1 responsive promoters promoting transcriptional activation and thereby facilitates G1 to S phase transition. Modulates expression of homeobox protein PDX1, perhaps acting in concert with transcription factor E2F1, thereby regulating pancreatic beta-cell growth and glucose-stimulated insulin secretion. May negatively modulate transcriptional activity of FOXO3. The sequence is that of Host cell factor 1 from Mesocricetus auratus (Golden hamster).